Here is a 445-residue protein sequence, read N- to C-terminus: Phosphoglucosamine mutase (445 aa).

Ser102 acts as the Phosphoserine intermediate in catalysis. Positions 102, 241, 243, and 245 each coordinate Mg(2+). Ser102 carries the post-translational modification Phosphoserine.

It belongs to the phosphohexose mutase family. The cofactor is Mg(2+). In terms of processing, activated by phosphorylation.

It carries out the reaction alpha-D-glucosamine 1-phosphate = D-glucosamine 6-phosphate. Catalyzes the conversion of glucosamine-6-phosphate to glucosamine-1-phosphate. This is Phosphoglucosamine mutase from Pectobacterium atrosepticum (strain SCRI 1043 / ATCC BAA-672) (Erwinia carotovora subsp. atroseptica).